The primary structure comprises 458 residues: UPF0210 protein MJ1665 (458 aa).

Belongs to the UPF0210 family.

The chain is UPF0210 protein MJ1665 from Methanocaldococcus jannaschii (strain ATCC 43067 / DSM 2661 / JAL-1 / JCM 10045 / NBRC 100440) (Methanococcus jannaschii).